The chain runs to 115 residues: Large ribosomal subunit protein bL19 (115 aa).

Belongs to the bacterial ribosomal protein bL19 family.

This protein is located at the 30S-50S ribosomal subunit interface and may play a role in the structure and function of the aminoacyl-tRNA binding site. The sequence is that of Large ribosomal subunit protein bL19 from Edwardsiella ictaluri (strain 93-146).